A 4998-amino-acid chain; its full sequence is SCO-spondin (4998 aa).

A signal peptide spans 1–17 (MLPLALLFGMLWTQANG). An EMI domain is found at 18 to 102 (HWCEQIETVH…ACCPGWGGAH (85 aa)). The VWFD 1 domain occupies 72–241 (GLCAIYKPPE…KLPGSEPGCL (170 aa)). Disulfide bonds link C74/C202 and C103/C240. N-linked (GlcNAc...) asparagine glycans are attached at residues N88 and N130. Residues 349 to 404 (CPGGQLYSDCVSSCPPSCSAVAQGEEGSCGKECVSGCECPTGLFWDGALCVPAAHC) enclose the TIL 1 domain. A VWFC 1 domain is found at 404–496 (CPCYHRRQRY…HGACDTGSCL (93 aa)). The 174-residue stretch at 442–615 (AECAVGGDGH…FQVSGDGRCP (174 aa)) folds into the VWFD 2 domain. 2 cysteine pairs are disulfide-bonded: C444–C577 and C468–C614. N-linked (GlcNAc...) asparagine glycosylation is found at N534 and N698. Residues 706–759 (CPGGQVYQECAPVCGHHCGEPEDCKELGICVAGCNCPPGLLWDLEGQCVPPSMC) form the TIL 2 domain. N-linked (GlcNAc...) asparagine glycans are attached at residues N771, N790, N824, and N866. Residues 892–1062 (GWCQASGAPH…HSWRLNPLCP (171 aa)) enclose the VWFD 3 domain. 3 cysteine pairs are disulfide-bonded: C894/C1026, C916/C1061, and C937/C944. Residues 1153-1209 (CEGGQVYEPCGSTCPPTCHDHHSELRWHCQVITCVEGCFCPEGTLLHGGACMKLAAC) form the TIL 3 domain. An N-linked (GlcNAc...) asparagine glycan is attached at N1230. 4 consecutive LDL-receptor class A domains span residues 1253-1290 (GCAE…EGCA), 1293-1328 (VCGE…EQGC), 1329-1365 (LCPH…ESCL), and 1369-1407 (SCIS…SHCS). Intrachain disulfides connect C1254-C1267, C1261-C1280, C1274-C1289, C1294-C1306, C1301-C1319, C1313-C1328, C1330-C1342, C1337-C1355, C1349-C1364, C1370-C1382, C1377-C1395, and C1389-C1406. The disordered stretch occupies residues 1406-1440 (CSLPSLPTPPGGIGQNPSTSSLDTAPSPVGSTSPA). Positions 1420–1440 (QNPSTSSLDTAPSPVGSTSPA) are enriched in polar residues. LDL-receptor class A domains follow at residues 1442-1478 (PCSL…LDCG) and 1480-1519 (PCML…DVCE). 6 disulfides stabilise this stretch: C1443–C1455, C1450–C1468, C1462–C1477, C1481–C1494, C1488–C1507, and C1501–C1518. N1528 carries N-linked (GlcNAc...) asparagine glycosylation. An LDL-receptor class A 7 domain is found at 1533–1571 (PCPEFSCPDGTCIDFLLVCDGNPDCELADETEPSLDEQG). 9 cysteine pairs are disulfide-bonded: C1534/C1544, C1539/C1557, C1551/C1572, C1584/C1620, C1588/C1625, C1599/C1610, C1640/C1680, C1644/C1685, and C1654/C1664. 2 TSP type-1 domains span residues 1572-1626 (CGAW…EACP) and 1628-1686 (DGEW…EGCL). The N-linked (GlcNAc...) asparagine glycan is linked to N1598. Residue N1687 is glycosylated (N-linked (GlcNAc...) asparagine). One can recognise a TIL 4 domain in the interval 1692 to 1746 (GELVFRTCAPCPLTCDDISGQAACPPDRPCSSPGCWCPDGKVLNTEGQCVRPRQC). EGF-like domains are found at residues 1702-1741 (CPLT…GQCV) and 1742-1768 (RPRQ…CQLC). One can recognise a TSP type-1 3 domain in the interval 1771 to 1827 (DCGWSSWSPWAECLGPCSSQSLQWSFRSPNNPRLSGHGRQCRGIHRKARRCQTEACE). Disulfide bonds link C1772-C1811, C1783-C1787, and C1821-C1826. The region spanning 1827-1887 (EGCEQWGLMY…GMGESCCHCA (61 aa)) is the VWFC 2 domain. N1892 and N1989 each carry an N-linked (GlcNAc...) asparagine glycan. Residues 1929-2085 (CYSPLGLAGL…IFLWVELLGL (157 aa)) form the F5/8 type C domain. The region spanning 2091-2127 (LCPGSRHRCASGECAPKGGPCDGAVDCDDGSDEEGCG) is the LDL-receptor class A 8 domain. 3 disulfide bridges follow: C2092–C2104, C2099–C2117, and C2111–C2126. Residues 2119–2209 (DGSDEEGCGS…TFPPGAKSLH (91 aa)) form a disordered region. Residues 2130–2144 (HASTTSRTPALSPTQ) are compositionally biased toward polar residues. Over residues 2148–2158 (FPREVSEDLRQ) the composition is skewed to basic and acidic residues. 2 stretches are compositionally biased toward polar residues: residues 2164–2173 (TSHSPPSSGE) and 2190–2201 (QPMQTLSATSTF). LDL-receptor class A domains lie at 2242 to 2278 (PCGP…QHCA) and 2299 to 2335 (LCSP…DNCV). 12 cysteine pairs are disulfide-bonded: C2243–C2255, C2250–C2268, C2262–C2277, C2300–C2312, C2307–C2325, C2319–C2334, C2337–C2373, C2348–C2352, C2383–C2388, C2403–C2440, C2407–C2445, and C2418–C2430. TSP type-1 domains follow at residues 2336 to 2389 (DCVL…QACP) and 2391 to 2446 (AGAW…QLCP). The region spanning 2468–2511 (VPPCPPSCLDPEANRSCSGHCMEGCRCPPGLLLQDSHCLPLSEC) is the TIL 5 domain. N-linked (GlcNAc...) asparagine glycans are attached at residues N2481 and N2530. TSP type-1 domains lie at 2551 to 2605 (SCGW…TDCG), 2609 to 2664 (PGWT…PVCP), and 2666 to 2719 (PSAW…HPCT). 9 cysteine pairs are disulfide-bonded: C2552–C2590, C2563–C2567, C2600–C2604, C2620–C2658, C2624–C2663, C2640–C2648, C2678–C2713, C2682–C2718, and C2693–C2703. Residues N2772 and N2802 are each glycosylated (N-linked (GlcNAc...) asparagine). 2 TSP type-1 domains span residues 2820–2875 (ACGW…RPCR) and 2876–2919 (GPGA…QPCA). 3 disulfides stabilise this stretch: C2821/C2859, C2832/C2836, and C2869/C2874. 4 N-linked (GlcNAc...) asparagine glycosylation sites follow: N2897, N2952, N2999, and N3009. In terms of domain architecture, TIL 6 spans 2926 to 2978 (CPEDQQWLDCAQGPASCAHLSIPGEANQTCHPGCYCLSGMLLLNNVCVPVQDC). 2 TSP type-1 domains span residues 3019–3086 (QPAW…PGCN) and 3088–3143 (AGGW…QPCP). 6 cysteine pairs are disulfide-bonded: C3031–C3080, C3035–C3085, C3046–C3070, C3100–C3137, C3104–C3142, and C3115–C3127. An N-linked (GlcNAc...) asparagine glycan is attached at N3146. The region spanning 3151 to 3201 (EGAEYSPCGPPCPRSCDDLVHCVWRCQPGCYCPLGKVLSADGAICVKPSYC) is the TIL 7 domain. A glycan (N-linked (GlcNAc...) asparagine) is linked at N3235. TSP type-1 domains follow at residues 3244 to 3306 (SGDW…TACP) and 3308 to 3363 (DGAW…TLCT). Intrachain disulfides connect C3256–C3299, C3260–C3305, C3271–C3283, C3320–C3355, C3323–C3362, and C3333–C3345. A glycan (N-linked (GlcNAc...) asparagine) is linked at N3301. N-linked (GlcNAc...) asparagine glycosylation is present at N3357. Residues 3365–3421 (CGGGQDLLPCGQPCPHSCQDLSLGSTCQPGSAGCQSGCGCPPGQLSQDGLCVFPVDC) enclose the TIL 8 domain. Residues N3435 and N3462 are each glycosylated (N-linked (GlcNAc...) asparagine). The TSP type-1 15 domain occupies 3481–3529 (PGIWSSWGPWEKCSVSCGGGEQLRSRQCARPPCPGLAQQSRICHIHVCR). Intrachain disulfides connect C3493–C3523, C3497–C3528, and C3508–C3513. The N-linked (GlcNAc...) asparagine glycan is linked to N3638. 4 TSP type-1 domains span residues 3657 to 3713 (HGSF…PECP), 3727 to 3779 (AGGW…PSCA), 3793 to 3849 (NCFW…RACP), and 3851 to 3906 (PGGW…MPCE). 3 cysteine pairs are disulfide-bonded: C3669/C3707, C3673/C3712, and C3685/C3697. N-linked (GlcNAc...) asparagine glycosylation is present at N3761. 6 disulfides stabilise this stretch: C3794–C3830, C3805–C3809, C3843–C3848, C3863–C3900, C3867–C3905, and C3878–C3890. One can recognise a TIL 9 domain in the interval 3909–3964 (CPAGMEMVSCANHCPYSCSDLQEGGMCQEDQACQLGCRCSEGFLEQDGGCVPVGHC). Residue N3986 is glycosylated (N-linked (GlcNAc...) asparagine). TSP type-1 domains are found at residues 4006-4059 (HCAW…VPCP), 4100-4155 (PRGW…QLCL), 4157-4213 (KLER…GPCQ), and 4215-4269 (DCTW…GNCS). 12 cysteine pairs are disulfide-bonded: C4007-C4043, C4018-C4022, C4053-C4058, C4112-C4149, C4116-C4154, C4127-C4139, C4169-C4207, C4173-C4212, C4184-C4195, C4216-C4253, C4227-C4229, and C4263-C4268. Residue N4196 is glycosylated (N-linked (GlcNAc...) asparagine). N-linked (GlcNAc...) asparagine glycosylation occurs at N4267. The region spanning 4273-4328 (CPPPFEFQSCGSPCAGLCATHLNHRLCQDLPPCQPGCYCPKGLLEQAGSCILPEQC) is the TIL 10 domain. N-linked (GlcNAc...) asparagine glycosylation is found at N4408 and N4463. The 52-residue stretch at 4465-4516 (TCQWGPWGPWSPCQMPCSGGFKLRWRVARDTSAGECPGPWAQTESCNMGSCP) folds into the TSP type-1 24 domain. Cystine bridges form between C4466–C4500, C4477–C4481, and C4510–C4515. The TIL 11 domain maps to 4530-4576 (DCANQCPRSCADLWDGVQCLQGPCSPGCRCPPGQLVQDGHCVPISSC). N4584, N4601, and N4606 each carry an N-linked (GlcNAc...) asparagine glycan. One can recognise a TSP type-1 25 domain in the interval 4616-4669 (CPVLGPWSAWSECSAVCGKGTMVRHRSCEEHPDREPCQALDLQQWQECNLQACP). Intrachain disulfides connect C4628/C4663, C4632/C4668, and C4643/C4652. One can recognise a TIL 12 domain in the interval 4671–4725 (CPPGQVLSTCATMCPSLCSHLWPGTICVREPCQLGCGCPGGQLLYNGTCIPPEAC). N-linked (GlcNAc...) asparagine glycosylation is found at N4716, N4756, N4799, and N4806. Positions 4777–4835 (CAPGEIWQHGKLGPCEKTCPEMNMTQAWSNCTEAQAPGCVCQLGYFRSQTGLCVPEDHC) constitute a TIL 13 domain. The VWFC 3 domain maps to 4835-4893 (CECWHHGSPHLPGSEWQEACESCRCLHGKSVCIRHCPELSCAQGEVIMQEPGSCCPICQ). 4 cysteine pairs are disulfide-bonded: C4892–C4952, C4918–C4969, C4928–C4985, and C4932–C4987. The 100-residue stretch at 4892–4991 (CQQDTLKEEP…IHSCQCSACQ (100 aa)) folds into the CTCK domain. N4912 carries an N-linked (GlcNAc...) asparagine glycan.

Belongs to the thrombospondin family. In terms of tissue distribution, subcommissural organ.

The protein resides in the secreted. The protein localises to the extracellular space. Its function is as follows. Involved in the modulation of neuronal aggregation. May be involved in developmental events during the formation of the central nervous system. The protein is SCO-spondin of Mus musculus (Mouse).